The chain runs to 479 residues: Monodehydroascorbate reductase 1, peroxisomal (479 aa).

At 1-3 the chain is on the cytoplasmic side; that stretch reads MGR. Residues 4-24 form a helical membrane-spanning segment; that stretch reads AFEYVILGGGVAAGYAALEFV. FAD is bound by residues 12–15, glutamate 41, arginine 48, lysine 53, and 147–148; these read GGVA and RN. Residues 25 to 445 are Peroxisomal-facing; that stretch reads RRNGGASSQE…QATGGGGKPT (421 aa). NAD(+)-binding positions include 172 to 178, arginine 202, and glycine 260; that span reads GGYIGME. Residues 174 to 178, arginine 202, and glycine 260 each bind NADP(+); that span reads YIGME. Aspartate 297 provides a ligand contact to FAD. 314–315 contributes to the NAD(+) binding site; it reads EH. 314–315 contributes to the NADP(+) binding site; the sequence is EH. Valine 316 is an FAD binding site. Residue arginine 320 coordinates L-ascorbate. Tyrosine 347 is an FAD binding site. Residue tyrosine 347 participates in NAD(+) binding. Tyrosine 347 is an NADP(+) binding site. Arginine 349 lines the L-ascorbate pocket. The helical transmembrane segment at 446–466 threads the bilayer; sequence CAWHATVGVAAAVSIAAFACW. The Cytoplasmic portion of the chain corresponds to 467-479; sequence YGWQAPYVLKRDF.

It belongs to the FAD-dependent oxidoreductase family. It depends on FAD as a cofactor.

It localises to the peroxisome membrane. The catalysed reaction is 2 monodehydro-L-ascorbate radical + NADH + H(+) = 2 L-ascorbate + NAD(+). Functionally, catalyzes the conversion of monodehydroascorbate to ascorbate, oxidizing NADH in the process. Ascorbate is a major antioxidant against reactive oxygen species (ROS) and nitric oxide (NO). The sequence is that of Monodehydroascorbate reductase 1, peroxisomal from Oryza sativa subsp. japonica (Rice).